The primary structure comprises 472 residues: Nuclear receptor subfamily 0 group B member 1 (472 aa).

3 consecutive repeat copies span residues 1–67 (MAGE…YRCC), 68–135 (FCGE…YRCC), and 136–202 (FCGK…YRSY). A 4 X 67 AA tandem repeats region spans residues 1–255 (MAGEDHPWHG…RPIALKDPQV (255 aa)). 3 consecutive short sequence motifs (LXXLL motif) follow at residues 13-17 (LYNLL), 80-84 (LYSML), and 148-152 (LYSLL). The NR LBD domain occupies 190 to 471 (QSTQAMAFLY…DMMLEMLCAK (282 aa)). A 4; truncated repeat occupies 203 to 255 (VCCEEQPQQSSVASDTPVRADQTPAAPQEQPRAPWWDTSSGVQRPIALKDPQV). Disordered regions lie at residues 214–237 (VASDTPVRADQTPAAPQEQPRAPW) and 326–345 (RRQETEGPEPADPQATEQPQ). Positions 463-468 (MMLEML) match the AF-2 motif motif.

It belongs to the nuclear hormone receptor family. NR0 subfamily. Homodimer. Interacts with NR5A1, NR5A2, NR0B2 and with COPS2. Interacts with ESRRB; represses ESRRB activity at the GATA6 promoter.

The protein localises to the nucleus. It is found in the cytoplasm. In terms of biological role, nuclear receptor that lacks a DNA-binding domain and acts as a corepressor that inhibits the transcriptional activity of other nuclear receptors through heterodimeric interactions. Component of a cascade required for the development of the hypothalamic-pituitary-adrenal-gonadal axis. May also have a role in the development of the embryo and in the maintenance of embryonic stem cell pluripotency. This Rattus norvegicus (Rat) protein is Nuclear receptor subfamily 0 group B member 1 (Nr0b1).